Here is a 152-residue protein sequence, read N- to C-terminus: D-aminoacyl-tRNA deacylase (152 aa).

The Gly-cisPro motif, important for rejection of L-amino acids signature appears at 137 to 138 (GP).

This sequence belongs to the DTD family. Homodimer.

It is found in the cytoplasm. It catalyses the reaction glycyl-tRNA(Ala) + H2O = tRNA(Ala) + glycine + H(+). It carries out the reaction a D-aminoacyl-tRNA + H2O = a tRNA + a D-alpha-amino acid + H(+). An aminoacyl-tRNA editing enzyme that deacylates mischarged D-aminoacyl-tRNAs. Also deacylates mischarged glycyl-tRNA(Ala), protecting cells against glycine mischarging by AlaRS. Acts via tRNA-based rather than protein-based catalysis; rejects L-amino acids rather than detecting D-amino acids in the active site. By recycling D-aminoacyl-tRNA to D-amino acids and free tRNA molecules, this enzyme counteracts the toxicity associated with the formation of D-aminoacyl-tRNA entities in vivo and helps enforce protein L-homochirality. The polypeptide is D-aminoacyl-tRNA deacylase (Methylibium petroleiphilum (strain ATCC BAA-1232 / LMG 22953 / PM1)).